Reading from the N-terminus, the 149-residue chain is Large ribosomal subunit protein bL9 (149 aa).

It belongs to the bacterial ribosomal protein bL9 family.

Its function is as follows. Binds to the 23S rRNA. The polypeptide is Large ribosomal subunit protein bL9 (Persephonella marina (strain DSM 14350 / EX-H1)).